A 298-amino-acid polypeptide reads, in one-letter code: Nucleotide-binding protein GTNG_3015 (298 aa).

17–24 provides a ligand contact to ATP; sequence GMSGAGKT. Position 68–71 (68–71) interacts with GTP; sequence DLRS.

The protein belongs to the RapZ-like family.

Displays ATPase and GTPase activities. The sequence is that of Nucleotide-binding protein GTNG_3015 from Geobacillus thermodenitrificans (strain NG80-2).